The sequence spans 600 residues: Glutamine--fructose-6-phosphate aminotransferase [isomerizing] (600 aa).

The Nucleophile; for GATase activity role is filled by C2. In terms of domain architecture, Glutamine amidotransferase type-2 spans 2 to 217; it reads CGIVGFIGEQ…DKEIVIVMKE (216 aa). SIS domains are found at residues 283–422 and 452–590; these read IRNA…AKGE and LAKQ…VDKP. Residue K595 is the For Fru-6P isomerization activity of the active site.

In terms of assembly, homodimer.

It localises to the cytoplasm. The enzyme catalyses D-fructose 6-phosphate + L-glutamine = D-glucosamine 6-phosphate + L-glutamate. In terms of biological role, catalyzes the first step in hexosamine metabolism, converting fructose-6P into glucosamine-6P using glutamine as a nitrogen source. The protein is Glutamine--fructose-6-phosphate aminotransferase [isomerizing] of Bacillus anthracis.